The sequence spans 361 residues: Endo-1,4-beta-xylanase 2 (361 aa).

A signal peptide spans 1 to 26; sequence MHFSTITAALALLGLGAATPTDYSTS. The 309-residue stretch at 46-354 folds into the GH10 domain; that stretch reads IGTALTIRDD…KPAYSSVLKT (309 aa). N-linked (GlcNAc...) asparagine glycans are attached at residues N88 and N130. E160 functions as the Proton donor in the catalytic mechanism. The active-site Nucleophile is E276. Residues C304 and C310 are joined by a disulfide bond.

The protein belongs to the glycosyl hydrolase 10 (cellulase F) family.

Its subcellular location is the secreted. It carries out the reaction Endohydrolysis of (1-&gt;4)-beta-D-xylosidic linkages in xylans.. It functions in the pathway glycan degradation; xylan degradation. Functionally, endo-1,4-beta-xylanase involved in the hydrolysis of xylan, a major structural heterogeneous polysaccharide found in plant biomass representing the second most abundant polysaccharide in the biosphere, after cellulose. Hydrolyzes birch-wood xylan, with a similar activity toward oat-spelt xylan. Also shows weak activities toward pNP-beta-D-cellobioside and pNP-beta-D-xylopyranoside, but no detectable activity toward carboxymethyl cellulose and pNP-beta-L-arabinofuranoside.-. The protein is Endo-1,4-beta-xylanase 2 (xynII) of Aureobasidium pullulans (Black yeast).